Consider the following 274-residue polypeptide: MELEKHTHLGKATEYPEEYSPSWLTPIPRAKSRETLGLSGKPDFVGEDLWNGYELSWLNSKGKPEVALGVFRIRCDSLNIIESKSFKLYLNSFNQSRFTSREEVEALMRKDLSAAAQGEVSVTLLSVTDWRDEPSFWRDAENLDVLDIDVDVYTPDASLLPDPVGDDVVEETLSSDLLKSNCPVTGQPDWATLYIHYRGKPLEKAALLKYIVSMRSHQDFHEHCVESVYLTLMQRYQPEKLAVYARYTRRGGLDINPLRSNYPLAADNFKLPRQ.

Residue 81–83 (IES) coordinates substrate. 83–84 (SK) contacts NADPH. The active-site Thioimide intermediate is Cys-182. Catalysis depends on Asp-189, which acts as the Proton donor. Residue 221–222 (HE) coordinates substrate. An NADPH-binding site is contributed by 250–251 (RG).

This sequence belongs to the GTP cyclohydrolase I family. QueF type 2 subfamily. In terms of assembly, homodimer.

It is found in the cytoplasm. The enzyme catalyses 7-aminomethyl-7-carbaguanine + 2 NADP(+) = 7-cyano-7-deazaguanine + 2 NADPH + 3 H(+). It participates in tRNA modification; tRNA-queuosine biosynthesis. In terms of biological role, catalyzes the NADPH-dependent reduction of 7-cyano-7-deazaguanine (preQ0) to 7-aminomethyl-7-deazaguanine (preQ1). This Hahella chejuensis (strain KCTC 2396) protein is NADPH-dependent 7-cyano-7-deazaguanine reductase.